The primary structure comprises 267 residues: Dihydropteroate synthase (267 aa).

One can recognise a Pterin-binding domain in the interval 1–251; it reads MTKTKIMGIL…NVELNAKLAK (251 aa). Position 11 (asparagine 11) interacts with Mg(2+). (7,8-dihydropterin-6-yl)methyl diphosphate is bound by residues threonine 51, aspartate 84, asparagine 103, aspartate 167, lysine 203, and 239-241; that span reads RVH.

Belongs to the DHPS family. As to quaternary structure, homodimer. The cofactor is Mg(2+).

It carries out the reaction (7,8-dihydropterin-6-yl)methyl diphosphate + 4-aminobenzoate = 7,8-dihydropteroate + diphosphate. It functions in the pathway cofactor biosynthesis; tetrahydrofolate biosynthesis; 7,8-dihydrofolate from 2-amino-4-hydroxy-6-hydroxymethyl-7,8-dihydropteridine diphosphate and 4-aminobenzoate: step 1/2. Functionally, catalyzes the condensation of para-aminobenzoate (pABA) with 6-hydroxymethyl-7,8-dihydropterin diphosphate (DHPt-PP) to form 7,8-dihydropteroate (H2Pte), the immediate precursor of folate derivatives. The sequence is that of Dihydropteroate synthase (folP) from Staphylococcus aureus (strain MSSA476).